The sequence spans 448 residues: Exodeoxyribonuclease 7 large subunit (448 aa).

This sequence belongs to the XseA family. As to quaternary structure, heterooligomer composed of large and small subunits.

It localises to the cytoplasm. It carries out the reaction Exonucleolytic cleavage in either 5'- to 3'- or 3'- to 5'-direction to yield nucleoside 5'-phosphates.. In terms of biological role, bidirectionally degrades single-stranded DNA into large acid-insoluble oligonucleotides, which are then degraded further into small acid-soluble oligonucleotides. This chain is Exodeoxyribonuclease 7 large subunit, found in Nitrosomonas europaea (strain ATCC 19718 / CIP 103999 / KCTC 2705 / NBRC 14298).